The sequence spans 607 residues: UvrABC system protein C (607 aa).

Residues 11 to 89 (CKPGVYRFED…IKEFAPPCNV (79 aa)) enclose the GIY-YIG domain. One can recognise a UVR domain in the interval 201 to 236 (SSLLESLKKKMLKASKNKEYEEAAILRDKIQAAQTV).

This sequence belongs to the UvrC family. In terms of assembly, interacts with UvrB in an incision complex.

Its subcellular location is the cytoplasm. Functionally, the UvrABC repair system catalyzes the recognition and processing of DNA lesions. UvrC both incises the 5' and 3' sides of the lesion. The N-terminal half is responsible for the 3' incision and the C-terminal half is responsible for the 5' incision. The sequence is that of UvrABC system protein C from Tropheryma whipplei (strain Twist) (Whipple's bacillus).